The following is a 217-amino-acid chain: Magnetosome protein MamA (217 aa).

TPR repeat units follow at residues 12–44 (VTLY…NDDI), 46–79 (QVYY…DAFD), 80–113 (VDVA…APDN), 114–147 (VKVA…NPIN), 148–181 (FNVR…RPNE), and 182–215 (GKVH…DEGA). Residues 41–112 (NDDIRQVYYR…LERSLADAPD (72 aa)) are N-terminal domain (NTD). Positions 113 to 217 (NVKVATVLGL…ANELDEGASV (105 aa)) are C-terminal domain (CTD).

Belongs to the magnetosome MamA family. Oligomerizes into high molecular weight complexes (at least 560 kDa). Forms round, 20 nm diameter complexes with a central cavity. Interacts with full-length Mms6. Probably binds MamC.

Its subcellular location is the magnetosome membrane. Probably forms a large homooligomer on which other magnetosome subunits assemble. Required for formation of functional magnetosomes from pre-existing vesicles, it has a dynamic location in the cell. This Paramagnetospirillum magneticum (strain ATCC 700264 / AMB-1) (Magnetospirillum magneticum) protein is Magnetosome protein MamA.